Here is a 280-residue protein sequence, read N- to C-terminus: Beta-glucosyl-HMC-alpha-glucosyl-transferase (280 aa).

It functions in the pathway genetic information processing; DNA modification. Functionally, transfers a gentiobiosyl-group on a hydroxymethylcytosine residue in DNA. Is involved in a DNA modification process to protects the phage genome against its own nucleases and the host restriction endonuclease system. This Enterobacteria phage T6 (Bacteriophage T6) protein is Beta-glucosyl-HMC-alpha-glucosyl-transferase.